The chain runs to 134 residues: Cytochrome b5 (134 aa).

The Cytochrome b5 heme-binding domain occupies 6–82 (TKTFTRAEVA…MKKYKIGELV (77 aa)). His41 and His65 together coordinate heme. Residues 86–105 (RTSVAQKSEPTWSTEQQTEE) are disordered. The segment covering 87–105 (TSVAQKSEPTWSTEQQTEE) has biased composition (polar residues). Residues 111–131 (WLVPLVLCLVATLFYKFFFGG) form a helical membrane-spanning segment.

The protein belongs to the cytochrome b5 family.

The protein localises to the endoplasmic reticulum membrane. It localises to the microsome membrane. In terms of biological role, cytochrome b5 is a membrane-bound hemoprotein which functions as an electron carrier for several membrane-bound oxygenases. This Drosophila melanogaster (Fruit fly) protein is Cytochrome b5 (Cyt-b5).